Here is a 44-residue protein sequence, read N- to C-terminus: Somatoliberin (44 aa).

L44 is subject to Leucine amide.

This sequence belongs to the glucagon family.

The protein resides in the secreted. In terms of biological role, GRF is released by the hypothalamus and acts on the adenohypophyse to stimulate the secretion of growth hormone. The polypeptide is Somatoliberin (GHRH) (Ovis aries (Sheep)).